The primary structure comprises 440 residues: Asparagine--tRNA ligase (440 aa).

Belongs to the class-II aminoacyl-tRNA synthetase family. As to quaternary structure, homodimer.

It is found in the cytoplasm. The catalysed reaction is tRNA(Asn) + L-asparagine + ATP = L-asparaginyl-tRNA(Asn) + AMP + diphosphate + H(+). In Chloroflexus aurantiacus (strain ATCC 29364 / DSM 637 / Y-400-fl), this protein is Asparagine--tRNA ligase.